The following is a 58-amino-acid chain: UPF0434 protein Swoo_1821 (58 aa).

Belongs to the UPF0434 family.

The chain is UPF0434 protein Swoo_1821 from Shewanella woodyi (strain ATCC 51908 / MS32).